Consider the following 191-residue polypeptide: UPF0312 protein Shewmr4_1178 (191 aa).

A signal peptide spans Met1 to Ala22.

The protein belongs to the UPF0312 family. Type 1 subfamily.

It localises to the periplasm. The polypeptide is UPF0312 protein Shewmr4_1178 (Shewanella sp. (strain MR-4)).